Reading from the N-terminus, the 297-residue chain is MVNIIQDFIPVGANNRPGYAMTPLYITVHNTANTAVGADAAAHARYLKNPDTTTSWHFTVDDTEIYQHLPLNENGWHAGDGNGSGNRASIGIEICENADGDFAKATANAQWLIKTLMAEHNISLANVVPHKYWSGKECPRKLLDTWDSFKAGIGGGGSQTYVVKQGDTLTSIARAFGVTVAQLQEWNNIEDPNLIRVGQVLIVSAPSAAEKPELYPLPDGIIQLTTPYTSGEHVFQVQRALAALYFYPDKGAVNNGIDGVYGPKTADAVARFQSVNGLTADGIYGPATKEKIAAQLS.

The N-terminal stretch at 1–44 (MVNIIQDFIPVGANNRPGYAMTPLYITVHNTANTAVGADAAAHA) is a signal peptide. The N-acetylmuramoyl-L-alanine amidase domain maps to 45–140 (RYLKNPDTTT…KYWSGKECPR (96 aa)). Residues 159–203 (QTYVVKQGDTLTSIARAFGVTVAQLQEWNNIEDPNLIRVGQVLIV) form the LysM domain.

This sequence belongs to the N-acetylmuramoyl-L-alanine amidase 2 family.

Its subcellular location is the secreted. The enzyme catalyses Hydrolyzes the link between N-acetylmuramoyl residues and L-amino acid residues in certain cell-wall glycopeptides.. Autolysins are involved in some important biological processes such as cell separation, cell-wall turnover, competence for genetic transformation, formation of the flagella and sporulation. In Bacillus subtilis (strain 168), this protein is N-acetylmuramoyl-L-alanine amidase XlyA (xlyA).